Reading from the N-terminus, the 302-residue chain is Heme A synthase (302 aa).

At 1-8 (MFRKQNLK) the chain is on the cytoplasmic side. Residues 9-29 (WLGVLATIIMTFVQLGGALVT) traverse the membrane as a helical segment. Residues 30–67 (KTGSEDGCGSSWPLCNGALLPENLPIQTIIELSHRAVS) lie on the Extracellular side of the membrane. A disulfide bond links Cys37 and Cys44. Residue Glu60 is part of the active site. His63 contributes to the heme o binding site. Residues 68-88 (AISLIVVLWLVITAWKNIGYI) form a helical membrane-spanning segment. Topologically, residues 89–93 (KEIKP) are cytoplasmic. Residues 94-114 (LSIISVGFLLVQALVGAAAVI) traverse the membrane as a helical segment. The Extracellular segment spans residues 115 to 125 (WQQNPYVLALH). A heme o-binding site is contributed by His125. Residues 126-146 (FGISLISFSSVFLMTLIIFSI) traverse the membrane as a helical segment. Residues 147 to 161 (DKKYEADILFIHKPL) lie on the Cytoplasmic side of the membrane. Residues 162–182 (RILTWLMAIIVYLTIYTGALV) form a helical membrane-spanning segment. The Extracellular segment spans residues 183-215 (RHTKSSLAYGAWPIPFDDIVPHNAHDWVQFSHR). His214 is a heme b binding site. A helical transmembrane segment spans residues 216-236 (GMAFITFIWIMITFIHAIKNY). Residues 237 to 244 (SDNRTVRY) lie on the Cytoplasmic side of the membrane. A helical membrane pass occupies residues 245–265 (GYTASFILVILQVITGALSVI). Over 266 to 270 (TNVNL) the chain is Extracellular. A helical membrane pass occupies residues 271–291 (IIALFHALFITYLFGMIAYFI). A heme b-binding site is contributed by His276. Residues 292–302 (LLMLRTTRSLK) are Cytoplasmic-facing.

Belongs to the COX15/CtaA family. Type 1 subfamily. In terms of assembly, interacts with CtaB. Requires heme b as cofactor.

It is found in the cell membrane. The enzyme catalyses Fe(II)-heme o + 2 A + H2O = Fe(II)-heme a + 2 AH2. The protein operates within porphyrin-containing compound metabolism; heme A biosynthesis; heme A from heme O: step 1/1. Its function is as follows. Catalyzes the conversion of heme O to heme A by two successive hydroxylations of the methyl group at C8. The first hydroxylation forms heme I, the second hydroxylation results in an unstable dihydroxymethyl group, which spontaneously dehydrates, resulting in the formyl group of heme A. This is Heme A synthase from Staphylococcus epidermidis (strain ATCC 12228 / FDA PCI 1200).